Here is a 358-residue protein sequence, read N- to C-terminus: NADH-quinone oxidoreductase subunit H (358 aa).

The next 8 membrane-spanning stretches (helical) occupy residues 30–50, 96–116, 129–149, 168–188, 201–221, 265–285, 297–317, and 336–356; these read VVIG…LIYM, FLYN…FSCL, VGVF…LLAG, IISY…LMGT, GWFI…YLIA, FIVA…LHIV, IPGF…LMWI, and YLVP…VFGL.

Belongs to the complex I subunit 1 family. In terms of assembly, NDH-1 is composed of 14 different subunits. Subunits NuoA, H, J, K, L, M, N constitute the membrane sector of the complex.

Its subcellular location is the cell inner membrane. It catalyses the reaction a quinone + NADH + 5 H(+)(in) = a quinol + NAD(+) + 4 H(+)(out). Its function is as follows. NDH-1 shuttles electrons from NADH, via FMN and iron-sulfur (Fe-S) centers, to quinones in the respiratory chain. The immediate electron acceptor for the enzyme in this species is believed to be ubiquinone. Couples the redox reaction to proton translocation (for every two electrons transferred, four hydrogen ions are translocated across the cytoplasmic membrane), and thus conserves the redox energy in a proton gradient. This subunit may bind ubiquinone. The polypeptide is NADH-quinone oxidoreductase subunit H (Bacteroides fragilis (strain ATCC 25285 / DSM 2151 / CCUG 4856 / JCM 11019 / LMG 10263 / NCTC 9343 / Onslow / VPI 2553 / EN-2)).